The following is a 364-amino-acid chain: Formate dehydrogenase (364 aa).

Positions 93 and 119 each coordinate substrate. NAD(+) is bound by residues 174–175, D195, 230–234, T256, D282, and 311–314; these read RI, PLHAG, and HYSG.

This sequence belongs to the D-isomer specific 2-hydroxyacid dehydrogenase family. FDH subfamily. In terms of assembly, homodimer.

It localises to the cytoplasm. The catalysed reaction is formate + NAD(+) = CO2 + NADH. Cu(2+), Hg and p-chloromercuribenzoate are strong inhibitors of enzyme activity and Ca(2+), Mg(2+), Zn(2+), Mn(2+), Cd(2+) and Sn(2+) have no effect on activity indicating a cysteine residue in the protein is essential for enzyme activity or to maintain the proper structure of the enzyme. Nitrite and nitrate inhibit some enzyme activity, however cyanide, azide, thiocyanate and cyanate are strong inhibitors of the enzymatic reaction. The inhibition of cyanide is competitive with formate and reversible. Functionally, catalyzes the NAD(+)-dependent oxidation of formate to carbon dioxide. Formate oxidation is the final step in the methanol oxidation pathway in methylotrophic microorganisms. Has a role in the detoxification of exogenous formate in non-methylotrophic organisms. The protein is Formate dehydrogenase of Candida boidinii (Yeast).